Reading from the N-terminus, the 320-residue chain is Malate dehydrogenase 2 (320 aa).

NAD(+) contacts are provided by residues 10-15 (GAGQIG) and D34. Substrate-binding residues include R83 and R89. Residues N96 and 119-121 (ITN) each bind NAD(+). Substrate contacts are provided by N121 and R152. The active-site Proton acceptor is the H176.

It belongs to the LDH/MDH superfamily. MDH type 3 family.

It catalyses the reaction (S)-malate + NAD(+) = oxaloacetate + NADH + H(+). Catalyzes the reversible oxidation of malate to oxaloacetate. This Rhodopseudomonas palustris (strain BisB18) protein is Malate dehydrogenase 2.